Consider the following 638-residue polypeptide: Growth hormone receptor (638 aa).

An N-terminal signal peptide occupies residues 1 to 18 (MDLWQLLLTLAVAGSGNA). The Extracellular segment spans residues 19 to 264 (VSGSEATPAI…SPFACEEDFQ (246 aa)). Intrachain disulfides connect Cys-56–Cys-66 and Cys-101–Cys-112. The N-linked (GlcNAc...) asparagine glycan is linked to Asn-115. An intrachain disulfide couples Cys-126 to Cys-140. One can recognise a Fibronectin type-III domain in the interval 151-254 (PPIGLNWTLL…EVLYVALPQM (104 aa)). N-linked (GlcNAc...) asparagine glycans are attached at residues Asn-156, Asn-161, and Asn-200. Positions 240-244 (YGEFS) match the WSXWS motif motif. A helical membrane pass occupies residues 265 to 288 (FPWFLIIIFGIFGLTMILFLFIFS). Residues 289 to 638 (KQQRIKMLIL…STDQLNKIMP (350 aa)) lie on the Cytoplasmic side of the membrane. The segment at 294–379 (KMLILPPVPV…HEKSLNILGA (86 aa)) is required for JAK2 binding. The Box 1 motif motif lies at 297–305 (ILPPVPVPK). The UbE motif signature appears at 340 to 349 (DSWVEFIELD). The residue at position 341 (Ser-341) is a Phosphoserine. The span at 429-446 (KNQSNSPSTDTAPNTQQP) shows a compositional bias: polar residues. The segment at 429 to 448 (KNQSNSPSTDTAPNTQQPGV) is disordered. Phosphotyrosine is present on residues Tyr-487 and Tyr-595.

This sequence belongs to the type I cytokine receptor family. Type 1 subfamily. On growth hormone (GH) binding, forms homodimers and binds JAK2 via a box 1-containing domain. The soluble form (GHBP) is produced by phorbol ester-promoted proteolytic cleavage at the cell surface (shedding) by ADAM17/TACE. Shedding is inhibited by growth hormone (GH) binding to the receptor probably due to a conformational change in GHR rendering the receptor inaccessible to ADAM17. Post-translationally, on GH binding, phosphorylated on tyrosine residues in the cytoplasmic domain by JAK2. In terms of processing, ubiquitinated by the ECS(SOCS2) complex following ligand-binding and phosphorylation by JAK2, leading to its degradation by the proteasome. Regulation by the ECS(SOCS2) complex acts as a negative feedback loop of growth hormone receptor signaling. Ubiquitination is not sufficient for GHR internalization.

Its subcellular location is the cell membrane. The protein resides in the secreted. Functionally, receptor for pituitary gland growth hormone (GH1) involved in regulating postnatal body growth. On ligand binding, couples to the JAK2/STAT5 pathway. Its function is as follows. The soluble form (GHBP) acts as a reservoir of growth hormone in plasma and may be a modulator/inhibitor of GH signaling. In Ailuropoda melanoleuca (Giant panda), this protein is Growth hormone receptor (GHR).